The chain runs to 61 residues: Large ribosomal subunit protein bL28 (61 aa).

Belongs to the bacterial ribosomal protein bL28 family.

The polypeptide is Large ribosomal subunit protein bL28 (rpmB) (Geobacillus stearothermophilus (Bacillus stearothermophilus)).